A 277-amino-acid polypeptide reads, in one-letter code: 3-methyl-2-oxobutanoate hydroxymethyltransferase (277 aa).

Mg(2+)-binding residues include Asp53 and Asp96. 3-methyl-2-oxobutanoate-binding positions include 53–54 (DS), Asp96, and Lys126. Residue Glu128 participates in Mg(2+) binding. Glu195 acts as the Proton acceptor in catalysis.

This sequence belongs to the PanB family. As to quaternary structure, homodecamer; pentamer of dimers. Mg(2+) serves as cofactor.

The protein resides in the cytoplasm. The enzyme catalyses 3-methyl-2-oxobutanoate + (6R)-5,10-methylene-5,6,7,8-tetrahydrofolate + H2O = 2-dehydropantoate + (6S)-5,6,7,8-tetrahydrofolate. Its pathway is cofactor biosynthesis; (R)-pantothenate biosynthesis; (R)-pantoate from 3-methyl-2-oxobutanoate: step 1/2. Its function is as follows. Catalyzes the reversible reaction in which hydroxymethyl group from 5,10-methylenetetrahydrofolate is transferred onto alpha-ketoisovalerate to form ketopantoate. The sequence is that of 3-methyl-2-oxobutanoate hydroxymethyltransferase from Chlorobaculum parvum (strain DSM 263 / NCIMB 8327) (Chlorobium vibrioforme subsp. thiosulfatophilum).